The following is a 409-amino-acid chain: Elongation factor 1-gamma (409 aa).

Residues 2–81 (SVGTVYGKIG…YLASLNKTRA (80 aa)) form the GST N-terminal domain. In terms of domain architecture, GST C-terminal spans 86–212 (TAEEKAKVLQ…EPLKFIDQPL (127 aa)). The segment covering 219-248 (NKEAAPAKKAEKKKDEKKKNAPKPQAERPA) has biased composition (basic and acidic residues). Positions 219–261 (NKEAAPAKKAEKKKDEKKKNAPKPQAERPAKPPKHPLASAPNG) are disordered. In terms of domain architecture, EF-1-gamma C-terminal spans 251 to 409 (PKHPLASAPN…REVADGKVCK (159 aa)).

In terms of assembly, EF-1 is composed of four subunits: alpha, beta, delta, and gamma.

Functionally, probably plays a role in anchoring the complex to other cellular components. The chain is Elongation factor 1-gamma (tef3) from Schizosaccharomyces pombe (strain 972 / ATCC 24843) (Fission yeast).